The sequence spans 152 residues: Flagellar assembly factor FliW (152 aa).

Belongs to the FliW family. In terms of assembly, interacts with translational regulator CsrA and flagellin(s).

It localises to the cytoplasm. Acts as an anti-CsrA protein, binds CsrA and prevents it from repressing translation of its target genes, one of which is flagellin. Binds to flagellin and participates in the assembly of the flagellum. The protein is Flagellar assembly factor FliW of Desulfitobacterium hafniense (strain Y51).